The primary structure comprises 213 residues: Large ribosomal subunit protein uL1 (213 aa).

It belongs to the universal ribosomal protein uL1 family. In terms of assembly, part of the 50S ribosomal subunit.

Its function is as follows. Binds directly to 23S rRNA. Probably involved in E site tRNA release. Functionally, protein L1 is also a translational repressor protein, it controls the translation of its operon by binding to its mRNA. The polypeptide is Large ribosomal subunit protein uL1 (Methanosarcina barkeri (strain Fusaro / DSM 804)).